The primary structure comprises 81 residues: ATP synthase subunit c (81 aa).

Transmembrane regions (helical) follow at residues 7 to 27 (AASV…PGIG) and 57 to 77 (LAFM…LLFA).

It belongs to the ATPase C chain family. F-type ATPases have 2 components, F(1) - the catalytic core - and F(0) - the membrane proton channel. F(1) has five subunits: alpha(3), beta(3), gamma(1), delta(1), epsilon(1). F(0) has four main subunits: a(1), b(1), b'(1) and c(10-14). The alpha and beta chains form an alternating ring which encloses part of the gamma chain. F(1) is attached to F(0) by a central stalk formed by the gamma and epsilon chains, while a peripheral stalk is formed by the delta, b and b' chains.

Its subcellular location is the cellular thylakoid membrane. F(1)F(0) ATP synthase produces ATP from ADP in the presence of a proton or sodium gradient. F-type ATPases consist of two structural domains, F(1) containing the extramembraneous catalytic core and F(0) containing the membrane proton channel, linked together by a central stalk and a peripheral stalk. During catalysis, ATP synthesis in the catalytic domain of F(1) is coupled via a rotary mechanism of the central stalk subunits to proton translocation. In terms of biological role, key component of the F(0) channel; it plays a direct role in translocation across the membrane. A homomeric c-ring of between 10-14 subunits forms the central stalk rotor element with the F(1) delta and epsilon subunits. This Nostoc sp. (strain PCC 7120 / SAG 25.82 / UTEX 2576) protein is ATP synthase subunit c.